A 1486-amino-acid polypeptide reads, in one-letter code: Phosphatidylinositol 3-kinase C2 domain-containing subunit gamma (1486 aa).

One can recognise a PI3K-RBD domain in the interval 285–371 (KTKFNIHIFI…IQLHLQKSRE (87 aa)). In terms of domain architecture, C2 PI3K-type spans 521–669 (LPSHLSFTVY…SPVTLQIDFP (149 aa)). One can recognise a PIK helical domain in the interval 684-860 (RSNLEEPLKE…QKLLAALQFC (177 aa)). Positions 929–1207 (DHDACSYFTS…KIKESLECFP (279 aa)) constitute a PI3K/PI4K catalytic domain. Positions 935–941 (YFTSNAL) are G-loop. Positions 1071–1079 (GVCDRHNDN) are catalytic loop. Positions 1090 to 1116 (HIDFGKFLGHAQTFGGIKRDRAPFIFT) are activation loop. A PX domain is found at 1240-1352 (LSTTRSIERA…SFFLSEAVQQ (113 aa)). The C2 domain maps to 1369–1486 (KKPKVQLVIS…KWYPLGNSII (118 aa)).

Belongs to the PI3/PI4-kinase family. Highly expressed in liver, prostate and testis. Lower levels in small intestine, kidney and pancreas.

Its subcellular location is the membrane. The catalysed reaction is a 1,2-diacyl-sn-glycero-3-phospho-(1D-myo-inositol 4-phosphate) + ATP = a 1,2-diacyl-sn-glycero-3-phospho-(1D-myo-inositol-3,4-bisphosphate) + ADP + H(+). It catalyses the reaction a 1,2-diacyl-sn-glycero-3-phospho-(1D-myo-inositol) + ATP = a 1,2-diacyl-sn-glycero-3-phospho-(1D-myo-inositol-3-phosphate) + ADP + H(+). Generates phosphatidylinositol 3-phosphate (PtdIns3P) and phosphatidylinositol 3,4-bisphosphate (PtdIns(3,4)P2) that act as second messengers. May play a role in SDF1A-stimulated chemotaxis. The protein is Phosphatidylinositol 3-kinase C2 domain-containing subunit gamma (PIK3C2G) of Homo sapiens (Human).